The primary structure comprises 285 residues: Nucleotide-binding protein Psyr_4150 (285 aa).

8-15 is an ATP binding site; that stretch reads GRSGSGKS. 60–63 contributes to the GTP binding site; sequence DARN.

This sequence belongs to the RapZ-like family.

In terms of biological role, displays ATPase and GTPase activities. This is Nucleotide-binding protein Psyr_4150 from Pseudomonas syringae pv. syringae (strain B728a).